Consider the following 453-residue polypeptide: Aldehyde dehydrogenase, dimeric NADP-preferring (453 aa).

The residue at position 2 (serine 2) is an N-acetylserine. Lysine 178 carries the N6-acetyllysine modification. 188–193 provides a ligand contact to NAD(+); it reads GSTAVG. Position 194 is an N6-acetyllysine (lysine 194). Residues glutamate 210 and cysteine 244 contribute to the active site.

The protein belongs to the aldehyde dehydrogenase family. Homodimer. In terms of tissue distribution, constitutively expressed in cornea, stomach, skin, bladder and lungs. Lowest expression levels in lungs and bladder.

The protein localises to the cytoplasm. It carries out the reaction an aldehyde + NAD(+) + H2O = a carboxylate + NADH + 2 H(+). It catalyses the reaction octanal + NAD(+) + H2O = octanoate + NADH + 2 H(+). Its function is as follows. ALDHs play a major role in the detoxification of alcohol-derived acetaldehyde. They are involved in the metabolism of corticosteroids, biogenic amines, neurotransmitters, and lipid peroxidation. Oxidizes medium and long chain aldehydes into non-toxic fatty acids. Preferentially oxidizes aromatic aldehyde substrates. Comprises about 50 percent of corneal epithelial soluble proteins. May play a role in preventing corneal damage caused by ultraviolet light. In Mus musculus (Mouse), this protein is Aldehyde dehydrogenase, dimeric NADP-preferring (Aldh3a1).